A 200-amino-acid chain; its full sequence is 3-isopropylmalate dehydratase small subunit (200 aa).

This sequence belongs to the LeuD family. LeuD type 1 subfamily. Heterodimer of LeuC and LeuD.

The enzyme catalyses (2R,3S)-3-isopropylmalate = (2S)-2-isopropylmalate. It participates in amino-acid biosynthesis; L-leucine biosynthesis; L-leucine from 3-methyl-2-oxobutanoate: step 2/4. Catalyzes the isomerization between 2-isopropylmalate and 3-isopropylmalate, via the formation of 2-isopropylmaleate. The chain is 3-isopropylmalate dehydratase small subunit from Pectobacterium atrosepticum (strain SCRI 1043 / ATCC BAA-672) (Erwinia carotovora subsp. atroseptica).